We begin with the raw amino-acid sequence, 90 residues long: Small ribosomal subunit protein bS20 (90 aa).

It belongs to the bacterial ribosomal protein bS20 family.

Functionally, binds directly to 16S ribosomal RNA. This is Small ribosomal subunit protein bS20 from Nautilia profundicola (strain ATCC BAA-1463 / DSM 18972 / AmH).